The chain runs to 187 residues: MCQWAATKGTRNHAYEREKLERAFAKILRHRDPSVPPRRSDPRPRKEVARQWRKPHIYSPADLRRMLDIARSYPSPRAALRQENMYTMLLLAYCAGLRRGELARLDLGDVNLGDGTITVRQTKFFKTRILPLPDSVVVSFGPISLHGVGSAHSRLLTPPCSGTNKAVPAPRQEGSPGCLQTSYVVPG.

The Tyr recombinase domain maps to 53–187 (RKPHIYSPAD…CLQTSYVVPG (135 aa)). Residues R98 and K123 contribute to the active site.

It belongs to the 'phage' integrase family.

This is an uncharacterized protein from Sinorhizobium fredii (strain NBRC 101917 / NGR234).